The sequence spans 125 residues: MPKTQRGIYHNLKESKYVASNNDVTFFFSSELYLNKFLDGYQEYRKKFNKKIERVAVTPWNMDMLADITFYSEVEKRGFHAWLKGDNATWREVHVYALRIMTKPSTLDWSRIQKPKLRERRKSMV.

Residues 77–96 (RGFHAWLKGDNATWREVHVY) constitute a DNA-binding region (H-T-H motif).

Belongs to the phi29likevirus late genes activator p4 family. As to quaternary structure, interacts with host RNA polymerase (via C-terminus). Interacts with DNA; binds to the A2b, A2c and A3 promoters.

Mediates, together with protein p6, the early to late transcriptional switch by stabilizing the binding of host RNA polymerase (RNAP) to the late A3 promoter. Activates transcription from the late A3 promoter and represses the main early promoters A2b and A2c by modifying the topology of the sequences encompassing early promoters A2c and A2b and late promoter A3 in a hairpin. Binds to a region of the A3 promoter located between nucleotides -50 and -100 relative to the transcription start site, that presents a sequence-directed curvature. Full induction of this curvature is needed for the transcription activation process. The sequence is that of Late genes activator p4 (4) from Bacillus phage PZA (Bacteriophage PZA).